The primary structure comprises 362 residues: Cationic peroxidase SPC4 (362 aa).

Positions 1-31 are cleaved as a signal peptide; sequence MSRAPTLAAAAAVAAVVLICSSSTATAADGN. Intrachain disulfides connect Cys50/Cys131, Cys83/Cys88, Cys138/Cys333, and Cys218/Cys245. The active-site Proton acceptor is the His81. Residues Asp82, Val85, Gly87, Asp89, and Ser91 each contribute to the Ca(2+) site. Asn109 carries N-linked (GlcNAc...) asparagine glycosylation. Residue Thr111 participates in (indol-3-yl)acetate binding. Pro181 is a substrate binding site. His211 contributes to the heme b binding site. Thr212 contributes to the Ca(2+) binding site. A glycan (N-linked (GlcNAc...) asparagine) is linked at Asn234. Ca(2+) contacts are provided by Asp257, Thr260, Ala263, and Asp265. Asn332 carries N-linked (GlcNAc...) asparagine glycosylation.

The protein belongs to the peroxidase family. Classical plant (class III) peroxidase subfamily. As to quaternary structure, monomer. Requires heme b as cofactor. Ca(2+) is required as a cofactor. The proportions of glycoforms I and II are 35% and 65% respectively. In terms of tissue distribution, present in germinated and ungerminated grain, seedlings, and leaves and stem of the mature plant.

It is found in the secreted. The enzyme catalyses 2 a phenolic donor + H2O2 = 2 a phenolic radical donor + 2 H2O. Its function is as follows. Removal of H(2)O(2), oxidation of toxic reductants, biosynthesis and degradation of lignin, suberization, auxin catabolism, response to environmental stresses such as wounding, pathogen attack and oxidative stress. These functions might be dependent on each isozyme/isoform in each plant tissue. Has a high preference for hydroxycinnamates as substrates. Substrate preference is ferulic acid &gt; p-coumaric acid &gt; N-acetyl tyrosine methyl ester &gt; N-acetyl-tyrosine &gt; tyrosine &gt; catechol &gt; Gly-Tyr-Gly. May be involved in the formation of diferulate linkages in the plant cell wall. This chain is Cationic peroxidase SPC4, found in Sorghum bicolor (Sorghum).